Reading from the N-terminus, the 983-residue chain is Protein translocase subunit SecA (983 aa).

ATP contacts are provided by residues Gln-83, Gly-101–Thr-105, and Asp-489. The interval Ile-948–Glu-983 is disordered. The segment covering Glu-973–Glu-983 has biased composition (polar residues).

This sequence belongs to the SecA family. As to quaternary structure, monomer and homodimer. Part of the essential Sec protein translocation apparatus which comprises SecA, SecYEG and auxiliary proteins SecDF. Other proteins may also be involved.

It is found in the cell membrane. The protein resides in the cytoplasm. The catalysed reaction is ATP + H2O + cellular proteinSide 1 = ADP + phosphate + cellular proteinSide 2.. Functionally, part of the Sec protein translocase complex. Interacts with the SecYEG preprotein conducting channel. Has a central role in coupling the hydrolysis of ATP to the transfer of proteins into and across the cell membrane, serving as an ATP-driven molecular motor driving the stepwise translocation of polypeptide chains across the membrane. This Mesomycoplasma hyopneumoniae (strain 232) (Mycoplasma hyopneumoniae) protein is Protein translocase subunit SecA.